The primary structure comprises 718 residues: Catalase-peroxidase (718 aa).

The segment at 1 to 24 (MDQKSDNAGKCPVAHTVPKGRSNR) is disordered. Positions 95–217 (WHSAGTYRIT…LAAVQMGLIY (123 aa)) form a cross-link, tryptophyl-tyrosyl-methioninium (Trp-Tyr) (with M-243). The active-site Proton acceptor is His-96. The tryptophyl-tyrosyl-methioninium (Tyr-Met) (with W-95) cross-link spans 217–243 (YVNPEGPNGNPDPVAAAREIRETFARM). His-258 serves as a coordination point for heme b.

It belongs to the peroxidase family. Peroxidase/catalase subfamily. Homodimer or homotetramer. Heme b serves as cofactor. Formation of the three residue Trp-Tyr-Met cross-link is important for the catalase, but not the peroxidase activity of the enzyme.

It carries out the reaction H2O2 + AH2 = A + 2 H2O. The catalysed reaction is 2 H2O2 = O2 + 2 H2O. Functionally, bifunctional enzyme with both catalase and broad-spectrum peroxidase activity. The chain is Catalase-peroxidase from Sinorhizobium fredii (strain NBRC 101917 / NGR234).